Reading from the N-terminus, the 327-residue chain is Lipoyl synthase (327 aa).

Residues cysteine 66, cysteine 71, cysteine 77, cysteine 92, cysteine 96, cysteine 99, and serine 306 each coordinate [4Fe-4S] cluster. Residues 78-295 (FSKGTATFMI…EKEAYELGFT (218 aa)) enclose the Radical SAM core domain.

Belongs to the radical SAM superfamily. Lipoyl synthase family. Requires [4Fe-4S] cluster as cofactor.

The protein localises to the cytoplasm. It catalyses the reaction [[Fe-S] cluster scaffold protein carrying a second [4Fe-4S](2+) cluster] + N(6)-octanoyl-L-lysyl-[protein] + 2 oxidized [2Fe-2S]-[ferredoxin] + 2 S-adenosyl-L-methionine + 4 H(+) = [[Fe-S] cluster scaffold protein] + N(6)-[(R)-dihydrolipoyl]-L-lysyl-[protein] + 4 Fe(3+) + 2 hydrogen sulfide + 2 5'-deoxyadenosine + 2 L-methionine + 2 reduced [2Fe-2S]-[ferredoxin]. It participates in protein modification; protein lipoylation via endogenous pathway; protein N(6)-(lipoyl)lysine from octanoyl-[acyl-carrier-protein]: step 2/2. Its function is as follows. Catalyzes the radical-mediated insertion of two sulfur atoms into the C-6 and C-8 positions of the octanoyl moiety bound to the lipoyl domains of lipoate-dependent enzymes, thereby converting the octanoylated domains into lipoylated derivatives. In Neisseria gonorrhoeae (strain ATCC 700825 / FA 1090), this protein is Lipoyl synthase.